A 130-amino-acid polypeptide reads, in one-letter code: Phosphoribosyl-AMP cyclohydrolase 1 (130 aa).

Asp77 is a Mg(2+) binding site. Cys78 provides a ligand contact to Zn(2+). Positions 79 and 81 each coordinate Mg(2+). Zn(2+) is bound by residues Cys95 and Cys102.

Belongs to the PRA-CH family. As to quaternary structure, homodimer. Mg(2+) serves as cofactor. It depends on Zn(2+) as a cofactor.

It localises to the cytoplasm. The catalysed reaction is 1-(5-phospho-beta-D-ribosyl)-5'-AMP + H2O = 1-(5-phospho-beta-D-ribosyl)-5-[(5-phospho-beta-D-ribosylamino)methylideneamino]imidazole-4-carboxamide. Its pathway is amino-acid biosynthesis; L-histidine biosynthesis; L-histidine from 5-phospho-alpha-D-ribose 1-diphosphate: step 3/9. Its function is as follows. Catalyzes the hydrolysis of the adenine ring of phosphoribosyl-AMP. The protein is Phosphoribosyl-AMP cyclohydrolase 1 of Pseudomonas fluorescens (strain ATCC BAA-477 / NRRL B-23932 / Pf-5).